A 360-amino-acid polypeptide reads, in one-letter code: Peptide chain release factor 1 (360 aa).

N5-methylglutamine is present on glutamine 236. The segment at 288 to 308 (QDEQDAERKSTIGTGDRSERI) is disordered. Residues 293-308 (AERKSTIGTGDRSERI) are compositionally biased toward basic and acidic residues.

The protein belongs to the prokaryotic/mitochondrial release factor family. In terms of processing, methylated by PrmC. Methylation increases the termination efficiency of RF1.

The protein resides in the cytoplasm. Functionally, peptide chain release factor 1 directs the termination of translation in response to the peptide chain termination codons UAG and UAA. The chain is Peptide chain release factor 1 from Streptococcus equi subsp. zooepidemicus (strain H70).